The primary structure comprises 212 residues: ATP-dependent dethiobiotin synthetase BioD (212 aa).

An ATP-binding site is contributed by 13–18; it reads GIGKTV. T17 is a Mg(2+) binding site. The active site involves K33. S37 serves as a coordination point for substrate. E100 is a Mg(2+) binding site. ATP contacts are provided by residues 100 to 103 and 184 to 186; these read EGAG and PLL.

Belongs to the dethiobiotin synthetase family. Homodimer. It depends on Mg(2+) as a cofactor.

It localises to the cytoplasm. The catalysed reaction is (7R,8S)-7,8-diammoniononanoate + CO2 + ATP = (4R,5S)-dethiobiotin + ADP + phosphate + 3 H(+). It participates in cofactor biosynthesis; biotin biosynthesis; biotin from 7,8-diaminononanoate: step 1/2. In terms of biological role, catalyzes a mechanistically unusual reaction, the ATP-dependent insertion of CO2 between the N7 and N8 nitrogen atoms of 7,8-diaminopelargonic acid (DAPA, also called 7,8-diammoniononanoate) to form a ureido ring. The protein is ATP-dependent dethiobiotin synthetase BioD of Brucella melitensis biotype 2 (strain ATCC 23457).